A 290-amino-acid chain; its full sequence is Undecaprenyl-diphosphatase (290 aa).

The next 8 helical transmembrane spans lie at 1 to 21, 49 to 69, 101 to 121, 126 to 146, 160 to 180, 203 to 223, 232 to 252, and 266 to 286; these read MALW…FLPV, MILF…VVFW, LFWL…TLKA, VFAS…LLWW, INLK…MPGL, YSFF…AIEV, VGFS…IISL, and VFSF…IDLA.

Belongs to the UppP family.

It localises to the cell inner membrane. The enzyme catalyses di-trans,octa-cis-undecaprenyl diphosphate + H2O = di-trans,octa-cis-undecaprenyl phosphate + phosphate + H(+). Functionally, catalyzes the dephosphorylation of undecaprenyl diphosphate (UPP). Confers resistance to bacitracin. The polypeptide is Undecaprenyl-diphosphatase (Alkalilimnicola ehrlichii (strain ATCC BAA-1101 / DSM 17681 / MLHE-1)).